The sequence spans 190 residues: Adenine phosphoribosyltransferase (190 aa).

This sequence belongs to the purine/pyrimidine phosphoribosyltransferase family. In terms of assembly, homodimer.

The protein localises to the cytoplasm. The catalysed reaction is AMP + diphosphate = 5-phospho-alpha-D-ribose 1-diphosphate + adenine. The protein operates within purine metabolism; AMP biosynthesis via salvage pathway; AMP from adenine: step 1/1. Catalyzes a salvage reaction resulting in the formation of AMP, that is energically less costly than de novo synthesis. The chain is Adenine phosphoribosyltransferase from Treponema pallidum (strain Nichols).